The sequence spans 499 residues: Glycerol kinase (499 aa).

T12 serves as a coordination point for ADP. ATP contacts are provided by T12, T13, and S14. T12 contacts sn-glycerol 3-phosphate. Residue R16 participates in ADP binding. 3 residues coordinate sn-glycerol 3-phosphate: R82, E83, and Y134. Glycerol is bound by residues R82, E83, and Y134. At H230 the chain carries Phosphohistidine; by HPr. D244 contacts sn-glycerol 3-phosphate. D244 and Q245 together coordinate glycerol. Positions 266 and 309 each coordinate ADP. ATP-binding residues include T266, G309, Q313, and G410. ADP is bound by residues G410 and N414.

This sequence belongs to the FGGY kinase family. As to quaternary structure, homotetramer and homodimer (in equilibrium). Post-translationally, the phosphoenolpyruvate-dependent sugar phosphotransferase system (PTS), including enzyme I, and histidine-containing protein (HPr) are required for the phosphorylation, which leads to the activation of the enzyme.

The enzyme catalyses glycerol + ATP = sn-glycerol 3-phosphate + ADP + H(+). Its pathway is polyol metabolism; glycerol degradation via glycerol kinase pathway; sn-glycerol 3-phosphate from glycerol: step 1/1. With respect to regulation, activated by phosphorylation and inhibited by fructose 1,6-bisphosphate (FBP). In terms of biological role, key enzyme in the regulation of glycerol uptake and metabolism. Catalyzes the phosphorylation of glycerol to yield sn-glycerol 3-phosphate. The chain is Glycerol kinase from Staphylococcus haemolyticus (strain JCSC1435).